Here is a 691-residue protein sequence, read N- to C-terminus: Threonine--tRNA ligase (691 aa).

Residues 1–22 (MSVPAQPAPGADGGDPRQPIRV) form a disordered region. The TGS domain maps to 1–73 (MSVPAQPAPG…DADAEVTPIA (73 aa)). The catalytic stretch occupies residues 268 to 574 (DHRKLGVELD…LTEHYAGAFP (307 aa)). Zn(2+) contacts are provided by Cys-373, His-424, and His-551.

Belongs to the class-II aminoacyl-tRNA synthetase family. Homodimer. Zn(2+) serves as cofactor.

It is found in the cytoplasm. It catalyses the reaction tRNA(Thr) + L-threonine + ATP = L-threonyl-tRNA(Thr) + AMP + diphosphate + H(+). Catalyzes the attachment of threonine to tRNA(Thr) in a two-step reaction: L-threonine is first activated by ATP to form Thr-AMP and then transferred to the acceptor end of tRNA(Thr). Also edits incorrectly charged L-seryl-tRNA(Thr). This chain is Threonine--tRNA ligase, found in Mycobacterium ulcerans (strain Agy99).